Consider the following 692-residue polypeptide: Elongation factor G (692 aa).

Residues 8–282 enclose the tr-type G domain; sequence ENTRNIGIMA…GVVDYLPSPV (275 aa). Residues 17 to 24, 81 to 85, and 135 to 138 contribute to the GTP site; these read AHIDAGKT, DTPGH, and NKMD.

The protein belongs to the TRAFAC class translation factor GTPase superfamily. Classic translation factor GTPase family. EF-G/EF-2 subfamily.

It is found in the cytoplasm. Functionally, catalyzes the GTP-dependent ribosomal translocation step during translation elongation. During this step, the ribosome changes from the pre-translocational (PRE) to the post-translocational (POST) state as the newly formed A-site-bound peptidyl-tRNA and P-site-bound deacylated tRNA move to the P and E sites, respectively. Catalyzes the coordinated movement of the two tRNA molecules, the mRNA and conformational changes in the ribosome. The sequence is that of Elongation factor G from Geobacillus sp. (strain WCH70).